Reading from the N-terminus, the 388-residue chain is MKFVDEATIRVEAGNGGSGCVSFRREKYVPDGGPDGGDGGDGGSVYLQADENLNTLITYQFERFHNAERGKNGRGRDCTGHGGEDLVLKVPVGTRAVDAETEETLGDLTTHGQKMLVAKGGFHGLGNTRFKSSTNRAPRQKTLGTDGEVRSLRLELMLLADVGLLGMPNAGKSTFIRSVSKAKPKVADYPFTTLVPNLGVVNPRPGQSFVIADIPGLIEGAADGAGLGVQFLKHLERCRVLLHILDIEPIDGSNPVDSARAIVGELEKHSPKLAGKPRWLVINKADLMLEEELQEKIDKVVEELAWDGEVFTISAYNREGTAELALKLLDFIDTLPPEEEVDVEAEVEFKWDNYHQNANESVNEDYDDDLDDDDYDDDDYDVEVIYQR.

An Obg domain is found at 1–159 (MKFVDEATIR…RSLRLELMLL (159 aa)). One can recognise an OBG-type G domain in the interval 160–333 (ADVGLLGMPN…LALKLLDFID (174 aa)). GTP contacts are provided by residues 166 to 173 (GMPNAGKS), 191 to 195 (FTTLV), 213 to 216 (DIPG), 283 to 286 (NKAD), and 314 to 316 (SAY). The Mg(2+) site is built by S173 and T193. The tract at residues 356–377 (QNANESVNEDYDDDLDDDDYDD) is disordered. The segment covering 362 to 377 (VNEDYDDDLDDDDYDD) has biased composition (acidic residues).

Belongs to the TRAFAC class OBG-HflX-like GTPase superfamily. OBG GTPase family. As to quaternary structure, monomer. The cofactor is Mg(2+).

It is found in the cytoplasm. Functionally, an essential GTPase which binds GTP, GDP and possibly (p)ppGpp with moderate affinity, with high nucleotide exchange rates and a fairly low GTP hydrolysis rate. Plays a role in control of the cell cycle, stress response, ribosome biogenesis and in those bacteria that undergo differentiation, in morphogenesis control. The protein is GTPase Obg of Shewanella piezotolerans (strain WP3 / JCM 13877).